The chain runs to 248 residues: MTFGAKTSGSDDLKAIISAISTLVEEATFVATAEGISFRGMDPSHVALIDISWPNSAFEKYECDSDIKFGVRIDEFSKLIKRADKKDSIEISISEQNMLLVTVGKNKKYKMRLIESSATDTPLPKIPYDSKIILSSSKFDKILGDVQVVSDYLTIHTSDSKGDFSGKGDSGEVVIDLDKDDEGIEEISSKEDSVGTYSLEYLNPVVKAVGTTAGFITCEFSSAKPLRIEFKVANIGRIHFYLAPRVES.

This sequence belongs to the PCNA family. As to quaternary structure, homotrimer. The subunits circularize to form a toroid; DNA passes through its center. Replication factor C (RFC) is required to load the toroid on the DNA.

In terms of biological role, sliding clamp subunit that acts as a moving platform for DNA processing. Responsible for tethering the catalytic subunit of DNA polymerase and other proteins to DNA during high-speed replication. The polypeptide is DNA polymerase sliding clamp (Nitrosopumilus maritimus (strain SCM1)).